The sequence spans 477 residues: D-alanyl-D-alanine carboxypeptidase DacB (477 aa).

An N-terminal signal peptide occupies residues 1–20 (MRFSRFIIGLTSCIAFSVQA). The active-site Acyl-ester intermediate is Ser62. The Proton acceptor role is filled by Lys65. An absent in class-A beta-lactamases region spans residues 90–263 (GNVENGVLKG…YAGAILKDEL (174 aa)). Residue Ser306 is part of the active site. A substrate-binding site is contributed by Lys417.

This sequence belongs to the peptidase S13 family.

Its subcellular location is the periplasm. The enzyme catalyses Preferential cleavage: (Ac)2-L-Lys-D-Ala-|-D-Ala. Also transpeptidation of peptidyl-alanyl moieties that are N-acyl substituents of D-alanine.. The protein operates within cell wall biogenesis; peptidoglycan biosynthesis. In terms of biological role, not involved in transpeptidation but exclusively catalyzes a DD-carboxypeptidase and DD-endopeptidase reaction. This Escherichia coli (strain K12) protein is D-alanyl-D-alanine carboxypeptidase DacB (dacB).